We begin with the raw amino-acid sequence, 502 residues long: MTEKKYIVALDQGTTSSRAVVMDHDANIVSVSQREFEQIYPKAGWVEHDPMEIWATQSSTLVEVLAKADISSDQIAAIGITNQRETTIVWERETGKPIYNAIVWQCRRTAEICERLKRDGMEDYIRNNTGLVIDPYFSGTKVKWILDHVEGSRERARRGELLFGTVDTWLIWKMTQGRVHVTDYTNASRTMLFNIHTLDWDDKMLDALDIPRAMLPEVRRSSEVYGQTNIGGKGGTRIPIAGIAGDQQAALFGQLCVKEGMAKNTYGTGCFMLMNTGEKAVKSENGLLTTIACGPTGEVNYALEGAVFMAGASIQWLRDEMKLISDAFDSEYFATKVKDTNGVYVVPAFTGLGAPYWDPYARGAIFGLTRGVNSNHIIRATLESIAYQTRDVLEAMQADSGIRLHALRVDGGAVANNFLMQFQSDILGTRVERPEVREVTALGAAYLAGLAVGYWQNLDELQEKAVIEREFRPGIETTERNFRYSGWKKAVKRALAWEDHEE.

Threonine 14 lines the ADP pocket. ATP-binding residues include threonine 14, threonine 15, and serine 16. A sn-glycerol 3-phosphate-binding site is contributed by threonine 14. Position 18 (arginine 18) interacts with ADP. Sn-glycerol 3-phosphate contacts are provided by arginine 84, glutamate 85, tyrosine 136, and aspartate 246. Glycerol-binding residues include arginine 84, glutamate 85, tyrosine 136, aspartate 246, and glutamine 247. 2 residues coordinate ADP: threonine 268 and glycine 311. ATP-binding residues include threonine 268, glycine 311, glutamine 315, and glycine 412. ADP-binding residues include glycine 412 and asparagine 416.

This sequence belongs to the FGGY kinase family. In terms of assembly, homotetramer and homodimer (in equilibrium). Heterodimer with EIIA-Glc. Binds 1 zinc ion per glycerol kinase EIIA-Glc dimer. The zinc ion is important for dimerization.

It catalyses the reaction glycerol + ATP = sn-glycerol 3-phosphate + ADP + H(+). It functions in the pathway polyol metabolism; glycerol degradation via glycerol kinase pathway; sn-glycerol 3-phosphate from glycerol: step 1/1. Activity of this regulatory enzyme is affected by several metabolites. Allosterically and non-competitively inhibited by fructose 1,6-bisphosphate (FBP) and unphosphorylated phosphocarrier protein EIIA-Glc (III-Glc), an integral component of the bacterial phosphotransferase (PTS) system. Key enzyme in the regulation of glycerol uptake and metabolism. Catalyzes the phosphorylation of glycerol to yield sn-glycerol 3-phosphate. The sequence is that of Glycerol kinase from Citrobacter koseri (strain ATCC BAA-895 / CDC 4225-83 / SGSC4696).